We begin with the raw amino-acid sequence, 279 residues long: Ribosomal RNA small subunit methyltransferase A (279 aa).

S-adenosyl-L-methionine is bound by residues N28, L30, G55, E77, D103, and N122.

Belongs to the class I-like SAM-binding methyltransferase superfamily. rRNA adenine N(6)-methyltransferase family. RsmA subfamily.

The protein resides in the cytoplasm. The enzyme catalyses adenosine(1518)/adenosine(1519) in 16S rRNA + 4 S-adenosyl-L-methionine = N(6)-dimethyladenosine(1518)/N(6)-dimethyladenosine(1519) in 16S rRNA + 4 S-adenosyl-L-homocysteine + 4 H(+). Its function is as follows. Specifically dimethylates two adjacent adenosines (A1518 and A1519) in the loop of a conserved hairpin near the 3'-end of 16S rRNA in the 30S particle. May play a critical role in biogenesis of 30S subunits. The protein is Ribosomal RNA small subunit methyltransferase A of Ruegeria pomeroyi (strain ATCC 700808 / DSM 15171 / DSS-3) (Silicibacter pomeroyi).